Reading from the N-terminus, the 185-residue chain is Ribosome-recycling factor (185 aa).

The tract at residues 138–185 (ALKKQEKDGEITEDEERRLEKEVQKVTDESTKKIDQMADNKRKEIIQG) is disordered.

The protein belongs to the RRF family.

It localises to the cytoplasm. Responsible for the release of ribosomes from messenger RNA at the termination of protein biosynthesis. May increase the efficiency of translation by recycling ribosomes from one round of translation to another. The protein is Ribosome-recycling factor of Lactobacillus delbrueckii subsp. bulgaricus (strain ATCC BAA-365 / Lb-18).